The sequence spans 355 residues: 3-isopropylmalate dehydrogenase (355 aa).

4 residues coordinate substrate: Arg-90, Arg-100, Arg-128, and Asp-222. Asp-222, Asp-246, and Asp-250 together coordinate Mg(2+). NAD(+) is bound at residue 280-292; the sequence is GSAPDIAGKGIAN.

It belongs to the isocitrate and isopropylmalate dehydrogenases family. LeuB type 1 subfamily. As to quaternary structure, homodimer. Requires Mg(2+) as cofactor. Mn(2+) serves as cofactor.

It is found in the cytoplasm. It carries out the reaction (2R,3S)-3-isopropylmalate + NAD(+) = 4-methyl-2-oxopentanoate + CO2 + NADH. Its pathway is amino-acid biosynthesis; L-leucine biosynthesis; L-leucine from 3-methyl-2-oxobutanoate: step 3/4. In terms of biological role, catalyzes the oxidation of 3-carboxy-2-hydroxy-4-methylpentanoate (3-isopropylmalate) to 3-carboxy-4-methyl-2-oxopentanoate. The product decarboxylates to 4-methyl-2 oxopentanoate. The polypeptide is 3-isopropylmalate dehydrogenase (Burkholderia multivorans (strain ATCC 17616 / 249)).